A 495-amino-acid polypeptide reads, in one-letter code: Phenylalanine--tRNA ligase alpha subunit (495 aa).

Residues threonine 338, 377-379 (QLE), and tyrosine 417 contribute to the L-phenylalanine site. Glutamate 419 is a Mg(2+) binding site. Phenylalanine 442 is a binding site for L-phenylalanine.

It belongs to the class-II aminoacyl-tRNA synthetase family. Phe-tRNA synthetase alpha subunit type 2 subfamily. As to quaternary structure, tetramer of two alpha and two beta subunits. Requires Mg(2+) as cofactor.

The protein localises to the cytoplasm. The catalysed reaction is tRNA(Phe) + L-phenylalanine + ATP = L-phenylalanyl-tRNA(Phe) + AMP + diphosphate + H(+). In Methanosarcina mazei (strain ATCC BAA-159 / DSM 3647 / Goe1 / Go1 / JCM 11833 / OCM 88) (Methanosarcina frisia), this protein is Phenylalanine--tRNA ligase alpha subunit.